The following is a 713-amino-acid chain: TWiK family of potassium channels protein 12 (713 aa).

The Cytoplasmic portion of the chain corresponds to 1 to 15 (MTLFKKIQWFCNLIR). A helical membrane pass occupies residues 16 to 36 (LRSYYKFLLLIAYTAFGAWLF). Asn53, Asn77, and Asn98 each carry an N-linked (GlcNAc...) asparagine glycan. Residues 112–132 (WTWTGAMFYAGQLYTTIGYGY) constitute an intramembrane region (pore-forming). Residues 142 to 162 (ICTIFYALFGIPCFLMYLKIE) traverse the membrane as a helical segment. At 163 to 242 (NAIEWKKDKQ…AEERKKKPFP (80 aa)) the chain is on the cytoplasmic side. A helical membrane pass occupies residues 243 to 263 (IPIAIIMLIIWICFSASMFCI). Positions 267–287 (TWVFSSAVYFFIVSISTVGLG) form an intramembrane region, pore-forming. The helical transmembrane segment at 298–318 (VFNFLLILVGLALLSMCFELI) threads the bilayer. Over 319–713 (TDRVAKWKQK…LSKRDASTMA (395 aa)) the chain is Cytoplasmic.

This sequence belongs to the two pore domain potassium channel (TC 1.A.1.8) family.

It localises to the membrane. This is TWiK family of potassium channels protein 12 (twk-12) from Caenorhabditis elegans.